The primary structure comprises 458 residues: F-box/LRR-repeat protein At5g02910 (458 aa).

Residues 10–56 form the F-box domain; it reads MDFISSLPDEILHHILSSVPTKSAIRTSLLSKRWRYVWSETPSLSID. 8 LRR repeats span residues 57 to 84, 86 to 112, 133 to 161, 162 to 187, 226 to 251, 260 to 285, 325 to 353, and 389 to 414; these read CRRA…HLHT, LLNR…SLES, KQLF…LSLS, NCTL…ELLY, CLRL…DLNI, TAGF…TIGG, KLLR…HLND, and ESNL…VVLL.

The sequence is that of F-box/LRR-repeat protein At5g02910 from Arabidopsis thaliana (Mouse-ear cress).